The chain runs to 167 residues: Phosphopantetheine adenylyltransferase (167 aa).

A substrate-binding site is contributed by Ser11. ATP is bound by residues 11–12 and His19; that span reads SF. Residues Lys43, Thr76, and Arg90 each coordinate substrate. ATP is bound by residues 91-93, Glu101, and 126-132; these read GIR and YDALSST.

This sequence belongs to the bacterial CoaD family. As to quaternary structure, homohexamer. Requires Mg(2+) as cofactor.

The protein resides in the cytoplasm. The enzyme catalyses (R)-4'-phosphopantetheine + ATP + H(+) = 3'-dephospho-CoA + diphosphate. It participates in cofactor biosynthesis; coenzyme A biosynthesis; CoA from (R)-pantothenate: step 4/5. Its function is as follows. Reversibly transfers an adenylyl group from ATP to 4'-phosphopantetheine, yielding dephospho-CoA (dPCoA) and pyrophosphate. The chain is Phosphopantetheine adenylyltransferase from Lacticaseibacillus paracasei (strain ATCC 334 / BCRC 17002 / CCUG 31169 / CIP 107868 / KCTC 3260 / NRRL B-441) (Lactobacillus paracasei).